The chain runs to 498 residues: Lysine--tRNA ligase (498 aa).

Mg(2+) contacts are provided by Glu-401 and Glu-408.

Belongs to the class-II aminoacyl-tRNA synthetase family. Homodimer. The cofactor is Mg(2+).

It is found in the cytoplasm. It carries out the reaction tRNA(Lys) + L-lysine + ATP = L-lysyl-tRNA(Lys) + AMP + diphosphate. The polypeptide is Lysine--tRNA ligase (Dehalococcoides mccartyi (strain ATCC BAA-2266 / KCTC 15142 / 195) (Dehalococcoides ethenogenes (strain 195))).